The chain runs to 173 residues: Alpha-crystallin A chain (173 aa).

Position 1 is an N-acetylmethionine (methionine 1). Residues 1 to 63 (MDITIQHPWF…RTVLESGISE (63 aa)) form a required for complex formation with BFSP1 and BFSP2 region. Glutamine 6 is modified (deamidated glutamine; partial). Serine 45 is modified (phosphoserine). Glutamine 50 is subject to Deamidated glutamine; partial. Residues 52-164 (LFRTVLESGI…SDRSIPVSRE (113 aa)) form the sHSP domain. An N6-acetyllysine modification is found at lysine 99. Zn(2+) is bound by residues histidine 100, glutamate 102, and histidine 107. Serine 122 is modified (phosphoserine). Asparagine 123 is subject to Deamidated asparagine; partial. The segment at 144–173 (PKIHSNMESSHSDRSIPVSREEKPTLAPSS) is disordered. Positions 153-167 (SHSDRSIPVSREEKP) are enriched in basic and acidic residues. Histidine 154 is a Zn(2+) binding site. Residue serine 162 is glycosylated (O-linked (GlcNAc) serine).

The protein belongs to the small heat shock protein (HSP20) family. As to quaternary structure, heteromer composed of three CRYAA and one CRYAB subunits. Inter-subunit bridging via zinc ions enhances stability, which is crucial as there is no protein turn over in the lens. Can also form homodimers and homotetramers (dimers of dimers) which serve as the building blocks of homooligomers. Within homooligomers, the zinc-binding motif is created from residues of 3 different molecules. His-100 and Glu-102 from one molecule are ligands of the zinc ion, and His-107 and His-154 residues from additional molecules complete the site with tetrahedral coordination geometry. Part of a complex required for lens intermediate filament formation composed of BFSP1, BFSP2 and CRYAA. Acetylation at Lys-99 may increase chaperone activity. In terms of processing, undergoes age-dependent proteolytical cleavage at the C-terminus.

Its subcellular location is the cytoplasm. The protein localises to the nucleus. Its function is as follows. Contributes to the transparency and refractive index of the lens. Acts as a chaperone, preventing aggregation of various proteins under a wide range of stress conditions. Required for the correct formation of lens intermediate filaments as part of a complex composed of BFSP1, BFSP2 and CRYAA. The protein is Alpha-crystallin A chain (CRYAA) of Didelphis virginiana (North American opossum).